Here is a 275-residue protein sequence, read N- to C-terminus: MANYTAADVKRLRELTGAGMLDSKNALVEADGDFDKAVELLRIKGAKDVGKRAERATAEGLVAAKDGALIELNSETDFVAKNAEFQALADQIVAAAVAAKANDIETLKAAKTGDTTVEQAIADLSAKIGEKLELRRAAYFDGTVEAYLHKRAADLPPAVGVLVEYQAGDADKGKEAAHAVALQIAALKAKYLTREDVPEDIVANERRIAEETARNEGKPEQALPKIVEGRVTGFYKDVVLLDQPSVSDNKKTVKALLDEAGVTVTRFVRFEVGQA.

Lysine 36 is covalently cross-linked (Isoglutamyl lysine isopeptide (Lys-Gln) (interchain with Q-Cter in protein Pup)). The segment at threonine 76 to valine 79 is involved in Mg(2+) ion dislocation from EF-Tu.

It belongs to the EF-Ts family.

Its subcellular location is the cytoplasm. Associates with the EF-Tu.GDP complex and induces the exchange of GDP to GTP. It remains bound to the aminoacyl-tRNA.EF-Tu.GTP complex up to the GTP hydrolysis stage on the ribosome. In Mycolicibacterium smegmatis (strain ATCC 700084 / mc(2)155) (Mycobacterium smegmatis), this protein is Elongation factor Ts.